Reading from the N-terminus, the 122-residue chain is Large ribosomal subunit protein uL14 (122 aa).

The protein belongs to the universal ribosomal protein uL14 family. Part of the 50S ribosomal subunit. Forms a cluster with proteins L3 and L19. In the 70S ribosome, L14 and L19 interact and together make contacts with the 16S rRNA in bridges B5 and B8.

In terms of biological role, binds to 23S rRNA. Forms part of two intersubunit bridges in the 70S ribosome. This chain is Large ribosomal subunit protein uL14, found in Caldicellulosiruptor saccharolyticus (strain ATCC 43494 / DSM 8903 / Tp8T 6331).